The primary structure comprises 185 residues: MLTLASKLKRDDGLKGSRTAATASDSTRRVSVRDKLLVKEVAELEANLPCTCKVHFPDPNKLHCFQLTVTPDEGYYQGGKFQFETEVPDAYNMVPPKVKCLTKIWHPNITETGEICLSLLREHSIDGTGWAPTRTLKDVVWGLNSLFTDLLNFDDPLNIEAAEHHLRDKEDFRNKVDDYIKRYAR.

The residue at position 1 (M1) is an N-acetylmethionine. Residues 1 to 29 are interaction with UBA3; the sequence is MLTLASKLKRDDGLKGSRTAATASDSTRR. A UBC core domain is found at 32-185; the sequence is VRDKLLVKEV…VDDYIKRYAR (154 aa). Residue C116 is the Glycyl thioester intermediate of the active site.

This sequence belongs to the ubiquitin-conjugating enzyme family. UBE2F subfamily. As to quaternary structure, interacts with UBA3 and RBX2. Interacts (N-terminally acetylated form) with (via DCUN1 domain) DCUN1D1, DCUN1D2, DCUN1D3, DCUN1D4 and DCUN1D5. Post-translationally, the acetylation of Met-1 increases affinity for DCUN1D3 by about 2 orders of magnitude and is crucial for NEDD8 transfer to cullins. As to expression, widely expressed (at protein level).

It carries out the reaction [E1 NEDD8-activating enzyme]-S-[NEDD8 protein]-yl-L-cysteine + [E2 NEDD8-conjugating enzyme]-L-cysteine = [E1 NEDD8-activating enzyme]-L-cysteine + [E2 NEDD8-conjugating enzyme]-S-[NEDD8-protein]-yl-L-cysteine.. The protein operates within protein modification; protein neddylation. Functionally, accepts the ubiquitin-like protein NEDD8 from the UBA3-NAE1 E1 complex and catalyzes its covalent attachment to other proteins. Together with the E3 ubiquitin ligase RNF7/RBX2, specifically neddylates cullin-5 (CUL5). Does not neddylate CUL1, CUL2, CUL3, CUL4A or CUL4B. Mediates neddylation of the CUL9-RBX1 complex. Its function is as follows. (Microbial infection) Following infection by HIV-1 virus, participates to HIV-1 Vif protein-mediated ubiquitination and degradation of APOBEC3G by mediating neddylation of cullin-5 (CUL5). This chain is NEDD8-conjugating enzyme UBE2F (UBE2F), found in Homo sapiens (Human).